Here is a 530-residue protein sequence, read N- to C-terminus: Cytochrome P450 monooxygenase sttB (530 aa).

A glycan (N-linked (GlcNAc...) asparagine) is linked at N5. A helical membrane pass occupies residues 24–44; it reads LPILTVALLTGIASAVYINVS. The N-linked (GlcNAc...) asparagine glycan is linked to N230.

It belongs to the cytochrome P450 family. Requires heme as cofactor.

Its subcellular location is the membrane. It catalyses the reaction preaspterpenacid acid I + reduced [NADPH--hemoprotein reductase] + O2 = preaspterpenacid acid II + oxidized [NADPH--hemoprotein reductase] + H2O + H(+). The protein operates within secondary metabolite biosynthesis; terpenoid biosynthesis. Its function is as follows. Cytochrome P450 monooxygenase; part of the gene cluster that mediates the biosynthesis of aspterpenacids. Performs the C22-oxidative modification of the terpene synthase sttA product preaspterpenacid I to produce preaspterpenacid II. It has still to be determined how preaspterpenacid II is further modified to produce aspterpenacids. This Aspergillus terreus (strain NIH 2624 / FGSC A1156) protein is Cytochrome P450 monooxygenase sttB.